The chain runs to 273 residues: SUMO-1 cysteine protease S273R (273 aa).

Catalysis depends on residues H168 and N187. Substrate is bound at residue Q226. Residue C232 is the Nucleophile of the active site.

It belongs to the peptidase C63 family.

It localises to the host cytoplasm. Its subcellular location is the virion. Functionally, cysteine protease that plays several role during infection including processing of the structural polyprotein or inhibition of the host immune response. Catalyzes the maturation of the pp220 and pp62 polyprotein precursors into core-shell proteins. Plays a role in the disruption of host pyroptosis via specific cleavage of gasdermin D/GSDMD. In addition, strongly decreases the host cGAS-STING signaling by targeting IKBKE via its enzymatic activity. Also impairs host FOXJ1-mediated antiviral effect via degradation of FOXJ1. This Ornithodoros (relapsing fever ticks) protein is SUMO-1 cysteine protease S273R.